We begin with the raw amino-acid sequence, 208 residues long: Large ribosomal subunit protein bL25 (208 aa).

A disordered region spans residues 163 to 208 (DYSYNHEPDEVVASILPPQKQEETEAESAAQDVEEPEKGTEEEKEE). Over residues 198 to 208 (PEKGTEEEKEE) the composition is skewed to basic and acidic residues.

This sequence belongs to the bacterial ribosomal protein bL25 family. CTC subfamily. Part of the 50S ribosomal subunit; part of the 5S rRNA/L5/L18/L25 subcomplex. Contacts the 5S rRNA. Binds to the 5S rRNA independently of L5 and L18.

This is one of the proteins that binds to the 5S RNA in the ribosome where it forms part of the central protuberance. In Bacillus licheniformis (strain ATCC 14580 / DSM 13 / JCM 2505 / CCUG 7422 / NBRC 12200 / NCIMB 9375 / NCTC 10341 / NRRL NRS-1264 / Gibson 46), this protein is Large ribosomal subunit protein bL25.